We begin with the raw amino-acid sequence, 375 residues long: tRNA-specific 2-thiouridylase MnmA 3 (375 aa).

ATP-binding positions include 11–18 (GMSGGIDS) and M37. C104 functions as the Nucleophile in the catalytic mechanism. C104 and C201 are disulfide-bonded. G128 is an ATP binding site. Residues 150 to 152 (KDQ) form an interaction with tRNA region. C201 serves as the catalytic Cysteine persulfide intermediate. An interaction with tRNA region spans residues 309-310 (RY).

It belongs to the MnmA/TRMU family.

It localises to the cytoplasm. The catalysed reaction is S-sulfanyl-L-cysteinyl-[protein] + uridine(34) in tRNA + AH2 + ATP = 2-thiouridine(34) in tRNA + L-cysteinyl-[protein] + A + AMP + diphosphate + H(+). In terms of biological role, catalyzes the 2-thiolation of uridine at the wobble position (U34) of tRNA, leading to the formation of s(2)U34. In Phocaeicola vulgatus (strain ATCC 8482 / DSM 1447 / JCM 5826 / CCUG 4940 / NBRC 14291 / NCTC 11154) (Bacteroides vulgatus), this protein is tRNA-specific 2-thiouridylase MnmA 3.